Here is a 383-residue protein sequence, read N- to C-terminus: Acetylornithine deacetylase (383 aa).

A Zn(2+)-binding site is contributed by His-80. Residue Asp-82 is part of the active site. A Zn(2+)-binding site is contributed by Asp-112. Glu-144 is an active-site residue. The Zn(2+) site is built by Glu-145, Glu-169, and His-355.

It belongs to the peptidase M20A family. ArgE subfamily. In terms of assembly, homodimer. Requires Zn(2+) as cofactor. Co(2+) is required as a cofactor. It depends on glutathione as a cofactor.

It is found in the cytoplasm. It carries out the reaction N(2)-acetyl-L-ornithine + H2O = L-ornithine + acetate. It participates in amino-acid biosynthesis; L-arginine biosynthesis; L-ornithine from N(2)-acetyl-L-ornithine (linear): step 1/1. In terms of biological role, catalyzes the hydrolysis of the amide bond of N(2)-acetylated L-amino acids. Cleaves the acetyl group from N-acetyl-L-ornithine to form L-ornithine, an intermediate in L-arginine biosynthesis pathway, and a branchpoint in the synthesis of polyamines. The polypeptide is Acetylornithine deacetylase (Shigella flexneri).